Consider the following 241-residue polypeptide: 1-(5-phosphoribosyl)-5-[(5-phosphoribosylamino)methylideneamino] imidazole-4-carboxamide isomerase (241 aa).

D8 (proton acceptor) is an active-site residue. Catalysis depends on D130, which acts as the Proton donor.

It belongs to the HisA/HisF family.

The protein resides in the cytoplasm. The catalysed reaction is 1-(5-phospho-beta-D-ribosyl)-5-[(5-phospho-beta-D-ribosylamino)methylideneamino]imidazole-4-carboxamide = 5-[(5-phospho-1-deoxy-D-ribulos-1-ylimino)methylamino]-1-(5-phospho-beta-D-ribosyl)imidazole-4-carboxamide. It functions in the pathway amino-acid biosynthesis; L-histidine biosynthesis; L-histidine from 5-phospho-alpha-D-ribose 1-diphosphate: step 4/9. This chain is 1-(5-phosphoribosyl)-5-[(5-phosphoribosylamino)methylideneamino] imidazole-4-carboxamide isomerase, found in Flavobacterium psychrophilum (strain ATCC 49511 / DSM 21280 / CIP 103535 / JIP02/86).